A 503-amino-acid polypeptide reads, in one-letter code: uncharacterized protein (503 aa).

The protein belongs to the Mg-chelatase subunits D/I family. ComM subfamily.

This is an uncharacterized protein from Mycobacterium tuberculosis (strain CDC 1551 / Oshkosh).